Here is a 205-residue protein sequence, read N- to C-terminus: Small ribosomal subunit protein uS4 (205 aa).

The segment at I19–L45 is disordered. The S4 RNA-binding domain occupies R94–V157.

The protein belongs to the universal ribosomal protein uS4 family. In terms of assembly, part of the 30S ribosomal subunit. Contacts protein S5. The interaction surface between S4 and S5 is involved in control of translational fidelity.

In terms of biological role, one of the primary rRNA binding proteins, it binds directly to 16S rRNA where it nucleates assembly of the body of the 30S subunit. With S5 and S12 plays an important role in translational accuracy. In Azorhizobium caulinodans (strain ATCC 43989 / DSM 5975 / JCM 20966 / LMG 6465 / NBRC 14845 / NCIMB 13405 / ORS 571), this protein is Small ribosomal subunit protein uS4.